The primary structure comprises 459 residues: Vacuolar fusion protein CCZ1 homolog (459 aa).

Belongs to the CCZ1 family.

The sequence is that of Vacuolar fusion protein CCZ1 homolog from Nematostella vectensis (Starlet sea anemone).